A 101-amino-acid chain; its full sequence is Small ribosomal subunit protein uS14 (101 aa).

This sequence belongs to the universal ribosomal protein uS14 family. Part of the 30S ribosomal subunit. Contacts proteins S3 and S10.

Binds 16S rRNA, required for the assembly of 30S particles and may also be responsible for determining the conformation of the 16S rRNA at the A site. The polypeptide is Small ribosomal subunit protein uS14 (Pseudomonas aeruginosa (strain LESB58)).